Consider the following 135-residue polypeptide: BolA-like protein 1 (135 aa).

Serine 81 is modified (phosphoserine). Residues 114 to 135 (WKENPQLDTSPACLGGSKKSRN) form a disordered region.

It belongs to the BolA/IbaG family. Interacts with GLRX5.

The protein localises to the mitochondrion. Functionally, acts as a mitochondrial iron-sulfur (Fe-S) cluster assembly factor that facilitates (Fe-S) cluster insertion into a subset of mitochondrial proteins. Probably acts together with the monothiol glutaredoxin GLRX5. May protect cells against oxidative stress. This chain is BolA-like protein 1 (BOLA1), found in Bos taurus (Bovine).